We begin with the raw amino-acid sequence, 123 residues long: uncharacterized protein (123 aa).

Helical transmembrane passes span 53–73 (VWFLFLFFIASHINILFFFFL) and 75–95 (VLWFLWCYLCSGLFLFDVFSH).

Its subcellular location is the membrane. This is an uncharacterized protein from Saccharomyces cerevisiae (strain ATCC 204508 / S288c) (Baker's yeast).